The primary structure comprises 89 residues: MPLASDVKQKIMSDYATVERDTGSPEVQVAMLTRRISDLTEHLKVHKHDHHSRRGLLLLVGRRRRLLNYLAKTDINRYRALIERLGLRR.

It belongs to the universal ribosomal protein uS15 family. As to quaternary structure, part of the 30S ribosomal subunit. Forms a bridge to the 50S subunit in the 70S ribosome, contacting the 23S rRNA.

In terms of biological role, one of the primary rRNA binding proteins, it binds directly to 16S rRNA where it helps nucleate assembly of the platform of the 30S subunit by binding and bridging several RNA helices of the 16S rRNA. Functionally, forms an intersubunit bridge (bridge B4) with the 23S rRNA of the 50S subunit in the ribosome. This is Small ribosomal subunit protein uS15 from Frankia casuarinae (strain DSM 45818 / CECT 9043 / HFP020203 / CcI3).